The following is a 1010-amino-acid chain: Phosphoenolpyruvate carboxylase (1010 aa).

Over residues 1–18 the composition is skewed to polar residues; that stretch reads MIMRSPETSGASMPQSTA. Disordered stretches follow at residues 1–36 and 132–154; these read MIMRSPETSGASMPQSTAHVPDGEQPRASGGSPGAG and LRPSRSQDDETAAPFDPFAPPLA. Residues histidine 195 and lysine 652 contribute to the active site. Positions 967–986 are disordered; the sequence is QNRQPPMSESPGTPEDRRTY.

Belongs to the PEPCase type 1 family. It depends on Mg(2+) as a cofactor.

It carries out the reaction oxaloacetate + phosphate = phosphoenolpyruvate + hydrogencarbonate. In terms of biological role, forms oxaloacetate, a four-carbon dicarboxylic acid source for the tricarboxylic acid cycle. This Parasynechococcus marenigrum (strain WH8102) protein is Phosphoenolpyruvate carboxylase.